The primary structure comprises 569 residues: Potassium-transporting ATPase potassium-binding subunit (569 aa).

Transmembrane regions (helical) follow at residues 11-31 (LLLA…ACVF), 64-84 (LAYT…LYGI), 135-155 (AGLA…ALAV), 179-199 (LYLL…MGIP), 258-278 (FNIL…GKMV), 285-305 (WALI…VYIA), 384-404 (GLYG…LMVG), 423-443 (MLAV…AAVL), 490-510 (LGIS…AIAG), and 531-551 (LFVG…YFPA).

Belongs to the KdpA family. The system is composed of three essential subunits: KdpA, KdpB and KdpC.

It is found in the cell inner membrane. Functionally, part of the high-affinity ATP-driven potassium transport (or Kdp) system, which catalyzes the hydrolysis of ATP coupled with the electrogenic transport of potassium into the cytoplasm. This subunit binds the periplasmic potassium ions and delivers the ions to the membrane domain of KdpB through an intramembrane tunnel. The polypeptide is Potassium-transporting ATPase potassium-binding subunit (Allorhizobium ampelinum (strain ATCC BAA-846 / DSM 112012 / S4) (Agrobacterium vitis (strain S4))).